The following is a 674-amino-acid chain: L-type lectin-domain containing receptor kinase SIT1 (674 aa).

A signal peptide spans 1 to 27 (MRRPELIMRSLPLILFLSLGSFHLAAA). The Extracellular portion of the chain corresponds to 28–301 (AVDDQFTFDG…IARAPSNVLK (274 aa)). The legume-lectin like stretch occupies residues 31–275 (DQFTFDGFAG…VLAWSFKMDG (245 aa)). N-linked (GlcNAc...) asparagine glycans are attached at residues asparagine 42, asparagine 61, asparagine 143, asparagine 196, asparagine 219, asparagine 240, and asparagine 281. The helical transmembrane segment at 302 to 322 (ILLPIASAALVSALAIAVLVI) threads the bilayer. Over 323-674 (HRRRRRYAEL…GNISDIPRAR (352 aa)) the chain is Cytoplasmic. In terms of domain architecture, Protein kinase spans 357–636 (FSDERLLGFG…LDGAMPLPEL (280 aa)). Residues 363–371 (LGFGGFGRV) and lysine 386 each bind ATP. Aspartate 482 functions as the Proton acceptor in the catalytic mechanism. Phosphothreonine occurs at positions 511, 515, 516, and 521.

In the C-terminal section; belongs to the protein kinase superfamily. Ser/Thr protein kinase family. This sequence in the N-terminal section; belongs to the leguminous lectin family. Interacts with B'KAPPA. In terms of processing, autophosphorylated at Thr-511, Thr-515 or Thr-516, and Thr-521 in response to salt stress. Dephosphorylated by phosphatase 2A in response to salt stress. In terms of tissue distribution, expressed in root epidermal cells.

Its subcellular location is the cell membrane. The enzyme catalyses L-seryl-[protein] + ATP = O-phospho-L-seryl-[protein] + ADP + H(+). It carries out the reaction L-threonyl-[protein] + ATP = O-phospho-L-threonyl-[protein] + ADP + H(+). Activated by autophosphorylation in response to salt stress. Lectin-domain containing receptor kinase involved in salt stress response. Acts as a negative regulator of salt tolerance. Mediates salt sensitivity by phosphorylating and activating MPK3 and MPK6. Promotes ethylene production and mediates salt-induced ethylene signaling. Promotes the accumulation of reactive oxygen species (ROS) under salt stress conditions. Its kinase activity is triggered by salt stress and is required for its function in salt stress response. Phosphorylates B'KAPPA, a B regulatory subunit of phosphatase 2A (PP2A). This chain is L-type lectin-domain containing receptor kinase SIT1, found in Oryza sativa subsp. japonica (Rice).